The following is a 480-amino-acid chain: 3-isopropylmalate dehydratase large subunit (480 aa).

The [4Fe-4S] cluster site is built by C357, C417, and C420. The span at 431-441 (GQRCASTSNRN) shows a compositional bias: polar residues. Residues 431–454 (GQRCASTSNRNFEGRQGKGGRTHL) are disordered.

Belongs to the aconitase/IPM isomerase family. LeuC type 1 subfamily. As to quaternary structure, heterodimer of LeuC and LeuD. The cofactor is [4Fe-4S] cluster.

It carries out the reaction (2R,3S)-3-isopropylmalate = (2S)-2-isopropylmalate. The protein operates within amino-acid biosynthesis; L-leucine biosynthesis; L-leucine from 3-methyl-2-oxobutanoate: step 2/4. Its function is as follows. Catalyzes the isomerization between 2-isopropylmalate and 3-isopropylmalate, via the formation of 2-isopropylmaleate. This chain is 3-isopropylmalate dehydratase large subunit, found in Mycobacteroides abscessus (strain ATCC 19977 / DSM 44196 / CCUG 20993 / CIP 104536 / JCM 13569 / NCTC 13031 / TMC 1543 / L948) (Mycobacterium abscessus).